Reading from the N-terminus, the 499-residue chain is Lysine--tRNA ligase (499 aa).

Positions 408 and 415 each coordinate Mg(2+).

Belongs to the class-II aminoacyl-tRNA synthetase family. In terms of assembly, homodimer. Mg(2+) serves as cofactor.

It localises to the cytoplasm. It catalyses the reaction tRNA(Lys) + L-lysine + ATP = L-lysyl-tRNA(Lys) + AMP + diphosphate. The protein is Lysine--tRNA ligase of Bacillus cereus (strain ATCC 10987 / NRS 248).